The primary structure comprises 515 residues: Protein DETOXIFICATION 32 (515 aa).

Residues 1–26 (METLNVDHEDTISSEQEHRAHTKSDT) show a composition bias toward basic and acidic residues. Residues 1–30 (METLNVDHEDTISSEQEHRAHTKSDTDMPP) are disordered. 12 consecutive transmembrane segments (helical) span residues 48 to 68 (LWWLAGPAIFTSFCQYSLGAV), 90 to 110 (VISGFSVGIMLGMGSALATLC), 131 to 151 (IILNSCALLLCLFYVFATPLL), 167 to 187 (FSLWMIPQLFAYAVNFATAKF), 194 to 214 (VIAMAVIAATVLLQHTLLSWL), 225 to 245 (GGAVVLNMSWWLIDVTQIVYI), 276 to 296 (AVMVCLEVWYFMALILFAGYL), 303 to 323 (VAALSICMNILGWPIMVAFGF), 347 to 367 (LIVAMITSVSIGIVISVTLIV), 392 to 412 (LLALTIVINNIQPVLSGVAVG), 418 to 438 (IVAYVNIGCYYLCGIPIGLVL), and 448 to 468 (GIWTGMLTGTVVQTSVLLFII). The span at 488–497 (GDQSNKREEI) shows a compositional bias: basic and acidic residues. A disordered region spans residues 488–515 (GDQSNKREEIDLCEEDENNSNGENNHRK). A compositionally biased stretch (low complexity) spans 506-515 (NSNGENNHRK).

It belongs to the multi antimicrobial extrusion (MATE) (TC 2.A.66.1) family.

The protein resides in the membrane. This chain is Protein DETOXIFICATION 32, found in Arabidopsis thaliana (Mouse-ear cress).